The following is a 28-amino-acid chain: Chaperonin GroEL (28 aa).

The protein belongs to the chaperonin (HSP60) family. As to quaternary structure, forms a cylinder of 14 subunits composed of two heptameric rings stacked back-to-back. Interacts with the co-chaperonin GroES.

The protein localises to the cytoplasm. It catalyses the reaction ATP + H2O + a folded polypeptide = ADP + phosphate + an unfolded polypeptide.. In terms of biological role, together with its co-chaperonin GroES, plays an essential role in assisting protein folding. The GroEL-GroES system forms a nano-cage that allows encapsulation of the non-native substrate proteins and provides a physical environment optimized to promote and accelerate protein folding. The sequence is that of Chaperonin GroEL from Mycolicibacterium smegmatis (Mycobacterium smegmatis).